The sequence spans 348 residues: Dihydroorotase (348 aa).

Residues H17 and H19 each contribute to the Zn(2+) site. Substrate-binding positions include 19–21 and N45; that span reads HLR. Residues K103, H140, and H178 each coordinate Zn(2+). Position 103 is an N6-carboxylysine (K103). Substrate is bound at residue H140. L223 contacts substrate. D251 contacts Zn(2+). D251 is an active-site residue. Substrate contacts are provided by H255 and A267.

This sequence belongs to the metallo-dependent hydrolases superfamily. DHOase family. Class II DHOase subfamily. As to quaternary structure, homodimer. Zn(2+) serves as cofactor.

The catalysed reaction is (S)-dihydroorotate + H2O = N-carbamoyl-L-aspartate + H(+). It functions in the pathway pyrimidine metabolism; UMP biosynthesis via de novo pathway; (S)-dihydroorotate from bicarbonate: step 3/3. In terms of biological role, catalyzes the reversible cyclization of carbamoyl aspartate to dihydroorotate. This Yersinia pestis protein is Dihydroorotase.